Here is a 120-residue protein sequence, read N- to C-terminus: Ribonuclease P protein component (120 aa).

The protein belongs to the RnpA family. In terms of assembly, consists of a catalytic RNA component (M1 or rnpB) and a protein subunit.

The catalysed reaction is Endonucleolytic cleavage of RNA, removing 5'-extranucleotides from tRNA precursor.. Functionally, RNaseP catalyzes the removal of the 5'-leader sequence from pre-tRNA to produce the mature 5'-terminus. It can also cleave other RNA substrates such as 4.5S RNA. The protein component plays an auxiliary but essential role in vivo by binding to the 5'-leader sequence and broadening the substrate specificity of the ribozyme. This chain is Ribonuclease P protein component, found in Pseudoalteromonas atlantica (strain T6c / ATCC BAA-1087).